A 203-amino-acid polypeptide reads, in one-letter code: NADH-ubiquinone oxidoreductase chain 6 (203 aa).

5 helical membrane passes run 16–36, 40–60, 70–90, 102–122, and 179–199; these read SNIL…TIVS, VVSV…LIMI, LLVY…LINI, YIPL…QKII, and WLII…VISI.

It belongs to the complex I subunit 6 family.

It is found in the mitochondrion membrane. It catalyses the reaction a ubiquinone + NADH + 5 H(+)(in) = a ubiquinol + NAD(+) + 4 H(+)(out). Functionally, core subunit of the mitochondrial membrane respiratory chain NADH dehydrogenase (Complex I) that is believed to belong to the minimal assembly required for catalysis. Complex I functions in the transfer of electrons from NADH to the respiratory chain. The immediate electron acceptor for the enzyme is believed to be ubiquinone. In Trichophyton rubrum (Athlete's foot fungus), this protein is NADH-ubiquinone oxidoreductase chain 6 (ND6).